A 106-amino-acid polypeptide reads, in one-letter code: uncharacterized protein (106 aa).

The disordered stretch occupies residues 54 to 106 (RSTLVATSPRRRSLVQQRRPPLREQNGGSGSSCVSSGGSASTVKTPGSRRASK). Low complexity predominate over residues 84–94 (SSCVSSGGSAS).

This is an uncharacterized protein from Human adenovirus C serotype 2 (HAdV-2).